We begin with the raw amino-acid sequence, 151 residues long: UPF0756 membrane protein Dred_1097 (151 aa).

4 consecutive transmembrane segments (helical) span residues 6–26 (IILL…LATA), 52–72 (VGLI…NIVY), 75–95 (LVMK…TLAT), and 111–131 (LIFG…GIPI).

Belongs to the UPF0756 family.

It localises to the cell membrane. The polypeptide is UPF0756 membrane protein Dred_1097 (Desulforamulus reducens (strain ATCC BAA-1160 / DSM 100696 / MI-1) (Desulfotomaculum reducens)).